A 124-amino-acid chain; its full sequence is Max-like protein 1 (124 aa).

Acidic residues predominate over residues 1–10 (MSDMSDLEDD). The disordered stretch occupies residues 1 to 44 (MSDMSDLEDDQTGHCGSGEHSGPFDPKRHAREQHNALERRRRDN). The tract at residues 29 to 42 (HAREQHNALERRRR) is basic motif. The bHLH domain occupies 29–82 (HAREQHNALERRRRDNIKDMYTSLREVVPDANGERVQASRAVILKKAIESIEKG). Residues 32–44 (EQHNALERRRRDN) are compositionally biased toward basic and acidic residues. Positions 43–82 (DNIKDMYTSLREVVPDANGERVQASRAVILKKAIESIEKG) are helix-loop-helix motif. Residues 86–113 (SATLSVDVAEQESKNAKLREEIARLKAK) adopt a coiled-coil conformation.

It belongs to the MAX family. Heterodimer with mdl-1 in presence and absence of DNA. Interacts with tdpt-1; the interaction promotes axon regeneration after injury. In terms of tissue distribution, expressed in D-type motor neurons.

The protein resides in the nucleus. In terms of biological role, transcriptional regulator which binds to the E box motif 5'-CACGTG-3', when in a heterodimeric complex with mdl-1. Involved in the control of lifespan in response to dietary restriction, the decline in protein homeostasis associated with normal aging and may overlap with the insulin-like signaling pathway. Involved in promoting infection by the microsporidian pathogen N.parisii. Required for the expression of svh-2 and the promotion of axon regeneration after injury. The sequence is that of Max-like protein 1 from Caenorhabditis elegans.